Reading from the N-terminus, the 500-residue chain is ATP synthase subunit alpha (500 aa).

169–176 is an ATP binding site; the sequence is GDRQTGKT.

It belongs to the ATPase alpha/beta chains family. F-type ATPases have 2 components, CF(1) - the catalytic core - and CF(0) - the membrane proton channel. CF(1) has five subunits: alpha(3), beta(3), gamma(1), delta(1), epsilon(1). CF(0) has three main subunits: a(1), b(2) and c(9-12). The alpha and beta chains form an alternating ring which encloses part of the gamma chain. CF(1) is attached to CF(0) by a central stalk formed by the gamma and epsilon chains, while a peripheral stalk is formed by the delta and b chains.

It localises to the cell membrane. The catalysed reaction is ATP + H2O + 4 H(+)(in) = ADP + phosphate + 5 H(+)(out). In terms of biological role, produces ATP from ADP in the presence of a proton gradient across the membrane. The alpha chain is a regulatory subunit. The sequence is that of ATP synthase subunit alpha from Lactococcus lactis subsp. cremoris (strain MG1363).